The sequence spans 358 residues: Acid phosphatase (358 aa).

The N-terminal stretch at 1-17 is a signal peptide; sequence MKFSTIALPLLASAALA. Asn20, Asn27, and Asn32 each carry an N-linked (GlcNAc...) asparagine glycan. Residues 21 to 41 form a disordered region; the sequence is SSHSGTNATSHNSTVPNENSK. Residues Asp49, Asp50, and Ser81 each contribute to the Mg(2+) site. N-linked (GlcNAc...) asparagine glycosylation is found at Asn92 and Asn145. Position 156 (Asn156) interacts with Mg(2+). Residue Ser189 is part of the active site. 2 N-linked (GlcNAc...) asparagine glycosylation sites follow: Asn199 and Asn278.

It belongs to the SurE nucleotidase family. It depends on Mg(2+) as a cofactor.

Its subcellular location is the secreted. It catalyses the reaction a phosphate monoester + H2O = an alcohol + phosphate. Its function is as follows. Probably serves to scavenge phosphorus for growing cells. This is Acid phosphatase (PHO2) from Yarrowia lipolytica (strain CLIB 122 / E 150) (Yeast).